The primary structure comprises 588 residues: Proteasome-associated ATPase (588 aa).

Basic and acidic residues predominate over residues 1 to 10 (MAAHDDDMNR). The disordered stretch occupies residues 1–23 (MAAHDDDMNRGIRPGRGSDDPAG). Residues 47-94 (RILEERIVELQTNLAGVSAQNERLANTLREARDQIVALKEEVDRLAQP) are a coiled coil. 276 to 281 (GCGKTL) serves as a coordination point for ATP. The segment at 587–588 (YL) is docks into pockets in the proteasome alpha-ring.

The protein belongs to the AAA ATPase family. In terms of assembly, homohexamer. Assembles into a hexameric ring structure that caps the 20S proteasome core. Strongly interacts with the prokaryotic ubiquitin-like protein Pup through a hydrophobic interface; the interacting region of ARC lies in its N-terminal coiled-coil domain. There is one Pup binding site per ARC hexamer ring. Upon ATP-binding, the C-terminus of ARC interacts with the alpha-rings of the proteasome core, possibly by binding to the intersubunit pockets.

Its pathway is protein degradation; proteasomal Pup-dependent pathway. Its function is as follows. ATPase which is responsible for recognizing, binding, unfolding and translocation of pupylated proteins into the bacterial 20S proteasome core particle. May be essential for opening the gate of the 20S proteasome via an interaction with its C-terminus, thereby allowing substrate entry and access to the site of proteolysis. Thus, the C-termini of the proteasomal ATPase may function like a 'key in a lock' to induce gate opening and therefore regulate proteolysis. The sequence is that of Proteasome-associated ATPase from Streptomyces avermitilis (strain ATCC 31267 / DSM 46492 / JCM 5070 / NBRC 14893 / NCIMB 12804 / NRRL 8165 / MA-4680).